Reading from the N-terminus, the 558-residue chain is Putative ABC transporter ATP-binding protein SAG1633 (558 aa).

2 consecutive ABC transporter domains span residues 5 to 246 (IEWK…GIRE) and 295 to 527 (LSVQ…THLK). Residues 39–46 (GPSGSGKS) and 328–335 (GKNGAGKS) contribute to the ATP site.

Belongs to the ABC transporter superfamily.

The protein localises to the cell membrane. Its function is as follows. Probably part of an ABC transporter complex. Responsible for energy coupling to the transport system. The sequence is that of Putative ABC transporter ATP-binding protein SAG1633 from Streptococcus agalactiae serotype V (strain ATCC BAA-611 / 2603 V/R).